A 589-amino-acid polypeptide reads, in one-letter code: Aspartate--tRNA ligase 2 (589 aa).

L-aspartate is bound at residue glutamate 174. Residues glutamine 198–lysine 201 form an aspartate region. Arginine 220 contributes to the L-aspartate binding site. Residues arginine 220–glutamate 222 and glutamine 229 contribute to the ATP site. An L-aspartate-binding site is contributed by histidine 443. Glutamate 477 serves as a coordination point for ATP. Arginine 484 contacts L-aspartate. Position 529-532 (glycine 529–arginine 532) interacts with ATP.

It belongs to the class-II aminoacyl-tRNA synthetase family. Type 1 subfamily. In terms of assembly, homodimer.

Its subcellular location is the cytoplasm. The enzyme catalyses tRNA(Asp) + L-aspartate + ATP = L-aspartyl-tRNA(Asp) + AMP + diphosphate. Catalyzes the attachment of L-aspartate to tRNA(Asp) in a two-step reaction: L-aspartate is first activated by ATP to form Asp-AMP and then transferred to the acceptor end of tRNA(Asp). The polypeptide is Aspartate--tRNA ligase 2 (Streptococcus mutans serotype c (strain ATCC 700610 / UA159)).